The chain runs to 443 residues: Protein translocase subunit SecY (443 aa).

10 helical membrane-spanning segments follow: residues 24–44 (LFVIGALIVFRIGSFIPIPGI), 77–97 (IFALGIMPYISASIIIQLLTV), 125–145 (LVLAIFQSIGIATGLPNMPGM), 154–174 (FAFYFTAVVSLVTGTMFLMWL), 183–203 (IGNGISIIIFAGIVAGLPPAI), 217–237 (FLVLLLVAVLVFAVTFFVVFV), 274–294 (VIPAIFASSIILFPATIASWF), 317–337 (YVLLYASAIIFFCFFYTALVF), 370–390 (MTRLTLVGALYITFICLIPEF), and 397–417 (VPFYFGGTSLLIVVVVIMDFM).

The protein belongs to the SecY/SEC61-alpha family. In terms of assembly, component of the Sec protein translocase complex. Heterotrimer consisting of SecY, SecE and SecG subunits. The heterotrimers can form oligomers, although 1 heterotrimer is thought to be able to translocate proteins. Interacts with the ribosome. Interacts with SecDF, and other proteins may be involved. Interacts with SecA.

Its subcellular location is the cell inner membrane. In terms of biological role, the central subunit of the protein translocation channel SecYEG. Consists of two halves formed by TMs 1-5 and 6-10. These two domains form a lateral gate at the front which open onto the bilayer between TMs 2 and 7, and are clamped together by SecE at the back. The channel is closed by both a pore ring composed of hydrophobic SecY resides and a short helix (helix 2A) on the extracellular side of the membrane which forms a plug. The plug probably moves laterally to allow the channel to open. The ring and the pore may move independently. The protein is Protein translocase subunit SecY of Escherichia coli O157:H7.